A 232-amino-acid polypeptide reads, in one-letter code: Triosephosphate isomerase (232 aa).

6–8 (NFK) serves as a coordination point for substrate. His-90 functions as the Electrophile in the catalytic mechanism. Glu-159 serves as the catalytic Proton acceptor. Substrate contacts are provided by Gly-165 and Ser-195.

This sequence belongs to the triosephosphate isomerase family. Homodimer.

Its subcellular location is the cytoplasm. It catalyses the reaction D-glyceraldehyde 3-phosphate = dihydroxyacetone phosphate. Its pathway is carbohydrate biosynthesis; gluconeogenesis. The protein operates within carbohydrate degradation; glycolysis; D-glyceraldehyde 3-phosphate from glycerone phosphate: step 1/1. Functionally, involved in the gluconeogenesis. Catalyzes stereospecifically the conversion of dihydroxyacetone phosphate (DHAP) to D-glyceraldehyde-3-phosphate (G3P). The polypeptide is Triosephosphate isomerase (Wolinella succinogenes (strain ATCC 29543 / DSM 1740 / CCUG 13145 / JCM 31913 / LMG 7466 / NCTC 11488 / FDC 602W) (Vibrio succinogenes)).